The primary structure comprises 388 residues: NADH-quinone oxidoreductase subunit D 2 (388 aa).

Belongs to the complex I 49 kDa subunit family. In terms of assembly, NDH-1 is composed of 14 different subunits. Subunits NuoB, C, D, E, F, and G constitute the peripheral sector of the complex.

Its subcellular location is the cell inner membrane. The enzyme catalyses a quinone + NADH + 5 H(+)(in) = a quinol + NAD(+) + 4 H(+)(out). In terms of biological role, NDH-1 shuttles electrons from NADH, via FMN and iron-sulfur (Fe-S) centers, to quinones in the respiratory chain. The immediate electron acceptor for the enzyme in this species is believed to be ubiquinone. Couples the redox reaction to proton translocation (for every two electrons transferred, four hydrogen ions are translocated across the cytoplasmic membrane), and thus conserves the redox energy in a proton gradient. The sequence is that of NADH-quinone oxidoreductase subunit D 2 from Sorangium cellulosum (strain So ce56) (Polyangium cellulosum (strain So ce56)).